The sequence spans 120 residues: uncharacterized protein (120 aa).

Positions 1–27 are cleaved as a signal peptide; the sequence is MPKIGVSLIVLIMLIIFLAGCNKNEQN.

This is an uncharacterized protein from Bacillus subtilis (strain 168).